The primary structure comprises 187 residues: Adenine phosphoribosyltransferase (187 aa).

Belongs to the purine/pyrimidine phosphoribosyltransferase family. In terms of assembly, homodimer.

The protein localises to the cytoplasm. It carries out the reaction AMP + diphosphate = 5-phospho-alpha-D-ribose 1-diphosphate + adenine. It functions in the pathway purine metabolism; AMP biosynthesis via salvage pathway; AMP from adenine: step 1/1. Its function is as follows. Catalyzes a salvage reaction resulting in the formation of AMP, that is energically less costly than de novo synthesis. This is Adenine phosphoribosyltransferase from Yersinia enterocolitica serotype O:8 / biotype 1B (strain NCTC 13174 / 8081).